A 250-amino-acid chain; its full sequence is tRNA (guanine-N(1)-)-methyltransferase (250 aa).

Residues glycine 115 and 135–140 (LGDFVL) each bind S-adenosyl-L-methionine.

The protein belongs to the RNA methyltransferase TrmD family. As to quaternary structure, homodimer.

It localises to the cytoplasm. It carries out the reaction guanosine(37) in tRNA + S-adenosyl-L-methionine = N(1)-methylguanosine(37) in tRNA + S-adenosyl-L-homocysteine + H(+). Functionally, specifically methylates guanosine-37 in various tRNAs. This chain is tRNA (guanine-N(1)-)-methyltransferase, found in Legionella pneumophila (strain Lens).